The following is a 182-amino-acid chain: Large ribosomal subunit protein uL6 (182 aa).

The protein belongs to the universal ribosomal protein uL6 family. As to quaternary structure, part of the 50S ribosomal subunit.

This protein binds to the 23S rRNA, and is important in its secondary structure. It is located near the subunit interface in the base of the L7/L12 stalk, and near the tRNA binding site of the peptidyltransferase center. The sequence is that of Large ribosomal subunit protein uL6 from Methanococcus vannielii.